Reading from the N-terminus, the 154-residue chain is Protein X (154 aa).

Positions 68 to 117 (PCALRFTSARCMETTVNAHQILPKVLHKRTLGLPAMSTTDLEAYFKDCVF) are mitochondrial targeting sequence.

Belongs to the orthohepadnavirus protein X family. May form homodimer. May interact with host CEBPA, CFLAR, CREB1, DDB1, E4F1, HBXIP, HSPD1/HSP60, NFKBIA, POLR2E and SMAD4. Interacts with host SMC5-SMC6 complex and induces its degradation. Interacts with host TRPC4AP; leading to prevent ubiquitination of TRPC4AP. Interacts with host PLSCR1; this interaction promotes ubiquitination and degradation of HBx and impairs HBx-mediated cell proliferation. Post-translationally, a fraction may be phosphorylated in insect cells and HepG2 cells, a human hepatoblastoma cell line. Phosphorylated in vitro by host protein kinase C or mitogen-activated protein kinase. N-acetylated in insect cells.

It is found in the host cytoplasm. Its subcellular location is the host nucleus. The protein localises to the host mitochondrion. Functionally, multifunctional protein that plays a role in silencing host antiviral defenses and promoting viral transcription. Does not seem to be essential for HBV infection. May be directly involved in development of cirrhosis and liver cancer (hepatocellular carcinoma). Most of cytosolic activities involve modulation of cytosolic calcium. The effect on apoptosis is controversial depending on the cell types in which the studies have been conducted. May induce apoptosis by localizing in mitochondria and causing loss of mitochondrial membrane potential. May also modulate apoptosis by binding host CFLAR, a key regulator of the death-inducing signaling complex (DISC). Promotes viral transcription by using the host E3 ubiquitin ligase DDB1 to target the SMC5-SMC6 complex to proteasomal degradation. This host complex would otherwise bind to viral episomal DNA, and prevents its transcription. Moderately stimulates transcription of many different viral and cellular transcription elements. Promoters and enhancers stimulated by HBx contain DNA binding sites for NF-kappa-B, AP-1, AP-2, c-EBP, ATF/CREB, or the calcium-activated factor NF-AT. This chain is Protein X, found in Homo sapiens (Human).